The following is a 440-amino-acid chain: tRNA-2-methylthio-N(6)-dimethylallyladenosine synthase (440 aa).

The region spanning 2-117 (KGLYIKTYGC…LPELIVKASR (116 aa)) is the MTTase N-terminal domain. The [4Fe-4S] cluster site is built by Cys-11, Cys-47, Cys-80, Cys-157, Cys-161, and Cys-164. Positions 143 to 374 (NSQGSSAFLA…QELISKQQLE (232 aa)) constitute a Radical SAM core domain. One can recognise a TRAM domain in the interval 377-440 (QSMIGKTIPV…RQNSLLGCAA (64 aa)).

Belongs to the methylthiotransferase family. MiaB subfamily. In terms of assembly, monomer. [4Fe-4S] cluster serves as cofactor.

It localises to the cytoplasm. It carries out the reaction N(6)-dimethylallyladenosine(37) in tRNA + (sulfur carrier)-SH + AH2 + 2 S-adenosyl-L-methionine = 2-methylsulfanyl-N(6)-dimethylallyladenosine(37) in tRNA + (sulfur carrier)-H + 5'-deoxyadenosine + L-methionine + A + S-adenosyl-L-homocysteine + 2 H(+). Functionally, catalyzes the methylthiolation of N6-(dimethylallyl)adenosine (i(6)A), leading to the formation of 2-methylthio-N6-(dimethylallyl)adenosine (ms(2)i(6)A) at position 37 in tRNAs that read codons beginning with uridine. The protein is tRNA-2-methylthio-N(6)-dimethylallyladenosine synthase of Wolbachia pipientis subsp. Culex pipiens (strain wPip).